We begin with the raw amino-acid sequence, 213 residues long: Adenylate kinase (213 aa).

14–19 (GSGKGT) serves as a coordination point for ATP. Residues 34 to 63 (SSGNLLRSAIKASTPLGIKASEYIDEGQLV) are NMP. AMP is bound by residues S35, R40, 61 to 63 (QLV), 89 to 92 (GFPR), and Q96. Residues 129–162 (SRFICPSCNFVYNQSQGFRECPTCHSELVRRSDD) form an LID region. ATP is bound at residue R130. Residues C133 and C136 each coordinate Zn(2+). 139–140 (VY) is a binding site for ATP. Zn(2+) is bound by residues C149 and C152. AMP is bound by residues R159 and R170. K198 is a binding site for ATP.

The protein belongs to the adenylate kinase family. As to quaternary structure, monomer.

It is found in the cytoplasm. The catalysed reaction is AMP + ATP = 2 ADP. It functions in the pathway purine metabolism; AMP biosynthesis via salvage pathway; AMP from ADP: step 1/1. Its function is as follows. Catalyzes the reversible transfer of the terminal phosphate group between ATP and AMP. Plays an important role in cellular energy homeostasis and in adenine nucleotide metabolism. This is Adenylate kinase from Chlamydia felis (strain Fe/C-56) (Chlamydophila felis).